The primary structure comprises 392 residues: Heavy metal-associated isoprenylated plant protein 6 (392 aa).

Basic and acidic residues predominate over residues Met-1–Thr-19. The disordered stretch occupies residues Met-1–Gly-22. The 64-residue stretch at Ile-23–Val-86 folds into the HMA 1 domain. The Cd(2+) site is built by Cys-34 and Cys-37. A disordered region spans residues Val-89 to Val-157. Over residues Ala-106–Ala-145 the composition is skewed to basic and acidic residues. Positions Glu-153–Val-216 constitute an HMA 2 domain. Residues Cys-164 and Cys-167 each coordinate Cd(2+). Over residues Lys-258–Val-270 the composition is skewed to basic and acidic residues. Disordered regions lie at residues Lys-258–Gly-285 and Gly-350–Met-392. The span at Val-272 to Gly-285 shows a compositional bias: gly residues. Cys-389 is subject to Cysteine methyl ester. Cys-389 is lipidated: S-farnesyl cysteine. Positions Ser-390–Met-392 are cleaved as a propeptide — removed in mature form.

Belongs to the HIPP family. As to expression, expressed in petioles, hypocotyls, peduncles, vascular bundles and root meristems.

Its subcellular location is the cell membrane. Its function is as follows. Heavy-metal-binding protein. Involved in the maintenance of heavy metal homeostasis and/or in detoxification. The sequence is that of Heavy metal-associated isoprenylated plant protein 6 from Arabidopsis thaliana (Mouse-ear cress).